A 274-amino-acid chain; its full sequence is MAHYFVGDIQGCFAELQKLLAKVDFNPSRDELWAVGDLVARGPDSLATLRFFRSLGDSAKTVLGNHDLHLMALHGKLKRTKPSDNLTEILESPDISASIDWLRQQPLMRELPEHQLIMSHAGVPPLWSLEVLREEAALVSCALKQDDYLEALISQMYSDSAEQWDPSAIGIERLRYCINALTRMRYLYVDGRLDFDCKQPPENCTNPQLKPWFEFASPLRQSHTLVFGHWAALMGNVGDSKLKALDTGCCWGEHLTLWHLEKDQKITQKKLKKS.

It belongs to the Ap4A hydrolase family.

The enzyme catalyses P(1),P(4)-bis(5'-adenosyl) tetraphosphate + H2O = 2 ADP + 2 H(+). In terms of biological role, hydrolyzes diadenosine 5',5'''-P1,P4-tetraphosphate to yield ADP. This is Bis(5'-nucleosyl)-tetraphosphatase, symmetrical from Shewanella baltica (strain OS223).